A 587-amino-acid polypeptide reads, in one-letter code: tRNA (guanine(37)-N(1))-methyltransferase 2 (587 aa).

Residues Arg-360 and 430-431 (DA) contribute to the S-adenosyl-L-methionine site. A disordered region spans residues 446–469 (ASTRSRKEDVTNKDGNHVTPTEPM). Residues 450–461 (SRKEDVTNKDGN) are compositionally biased toward basic and acidic residues. Asn-478 contacts S-adenosyl-L-methionine.

Belongs to the class I-like SAM-binding methyltransferase superfamily. TRM5/TYW2 family. In terms of assembly, monomer.

The protein localises to the mitochondrion matrix. It localises to the nucleus. The protein resides in the cytoplasm. The enzyme catalyses guanosine(37) in tRNA + S-adenosyl-L-methionine = N(1)-methylguanosine(37) in tRNA + S-adenosyl-L-homocysteine + H(+). Specifically methylates the N1 position of guanosine-37 in various cytoplasmic and mitochondrial tRNAs. Methylation is not dependent on the nature of the nucleoside 5' of the target nucleoside. This is the first step in the biosynthesis of wybutosine (yW), a modified base adjacent to the anticodon of tRNAs and required for accurate decoding. This is tRNA (guanine(37)-N(1))-methyltransferase 2 from Phaeodactylum tricornutum (strain CCAP 1055/1).